We begin with the raw amino-acid sequence, 176 residues long: Protein MOTHER of FT and TFL1 homolog 1 (176 aa).

The protein belongs to the phosphatidylethanolamine-binding protein family.

In terms of biological role, may form complexes with phosphorylated ligands by interfering with kinases and their effectors. The chain is Protein MOTHER of FT and TFL1 homolog 1 from Oryza sativa subsp. japonica (Rice).